Here is a 744-residue protein sequence, read N- to C-terminus: 1,4-alpha-glucan branching enzyme GlgB (744 aa).

Positions 1–23 (MSGPEDPADRRHGEVPAPRRDIP) are disordered. Residues 7–23 (PADRRHGEVPAPRRDIP) are compositionally biased toward basic and acidic residues. D424 functions as the Nucleophile in the catalytic mechanism. The active-site Proton donor is the E476.

The protein belongs to the glycosyl hydrolase 13 family. GlgB subfamily. Monomer.

It carries out the reaction Transfers a segment of a (1-&gt;4)-alpha-D-glucan chain to a primary hydroxy group in a similar glucan chain.. It functions in the pathway glycan biosynthesis; glycogen biosynthesis. In terms of biological role, catalyzes the formation of the alpha-1,6-glucosidic linkages in glycogen by scission of a 1,4-alpha-linked oligosaccharide from growing alpha-1,4-glucan chains and the subsequent attachment of the oligosaccharide to the alpha-1,6 position. The sequence is that of 1,4-alpha-glucan branching enzyme GlgB from Nocardia farcinica (strain IFM 10152).